Reading from the N-terminus, the 427-residue chain is Glutamate-1-semialdehyde 2,1-aminomutase (427 aa).

K264 is modified (N6-(pyridoxal phosphate)lysine).

It belongs to the class-III pyridoxal-phosphate-dependent aminotransferase family. HemL subfamily. As to quaternary structure, homodimer. Requires pyridoxal 5'-phosphate as cofactor.

The protein resides in the cytoplasm. It carries out the reaction (S)-4-amino-5-oxopentanoate = 5-aminolevulinate. It functions in the pathway porphyrin-containing compound metabolism; protoporphyrin-IX biosynthesis; 5-aminolevulinate from L-glutamyl-tRNA(Glu): step 2/2. The protein is Glutamate-1-semialdehyde 2,1-aminomutase of Clostridium botulinum (strain Alaska E43 / Type E3).